A 95-amino-acid polypeptide reads, in one-letter code: uncharacterized protein (95 aa).

This is an uncharacterized protein from Methanocaldococcus jannaschii (strain ATCC 43067 / DSM 2661 / JAL-1 / JCM 10045 / NBRC 100440) (Methanococcus jannaschii).